A 517-amino-acid polypeptide reads, in one-letter code: Retrotransposon-like protein 1 (517 aa).

Disordered stretches follow at residues 1–29 (MEVNEGQDTEGGSSRAQTLTPPPNPQQQL) and 142–161 (EEERDKRKKEEQFREADARS).

This chain is Retrotransposon-like protein 1 (retr-1), found in Caenorhabditis elegans.